An 87-amino-acid chain; its full sequence is Cytochrome c oxidase assembly factor 3, mitochondrial (87 aa).

The helical transmembrane segment at 47–69 threads the bilayer; sequence NNLLTAGALGVSVLAIYGYSIFS.

It belongs to the COA3 family.

It is found in the mitochondrion membrane. Plays a critical role in the biogenesis and activity of cytochrome c oxidase (COX) (complex IV). The chain is Cytochrome c oxidase assembly factor 3, mitochondrial (Ccdc56) from Drosophila melanogaster (Fruit fly).